The primary structure comprises 201 residues: Pyridoxal 5'-phosphate synthase subunit PdxT (201 aa).

49–51 (GES) provides a ligand contact to L-glutamine. C81 acts as the Nucleophile in catalysis. L-glutamine contacts are provided by residues R110 and 139–140 (IR). Active-site charge relay system residues include H180 and E182.

The protein belongs to the glutaminase PdxT/SNO family. In terms of assembly, in the presence of PdxS, forms a dodecamer of heterodimers. Only shows activity in the heterodimer.

The enzyme catalyses aldehydo-D-ribose 5-phosphate + D-glyceraldehyde 3-phosphate + L-glutamine = pyridoxal 5'-phosphate + L-glutamate + phosphate + 3 H2O + H(+). The catalysed reaction is L-glutamine + H2O = L-glutamate + NH4(+). It functions in the pathway cofactor biosynthesis; pyridoxal 5'-phosphate biosynthesis. Functionally, catalyzes the hydrolysis of glutamine to glutamate and ammonia as part of the biosynthesis of pyridoxal 5'-phosphate. The resulting ammonia molecule is channeled to the active site of PdxS. This Salinispora tropica (strain ATCC BAA-916 / DSM 44818 / JCM 13857 / NBRC 105044 / CNB-440) protein is Pyridoxal 5'-phosphate synthase subunit PdxT.